Consider the following 822-residue polypeptide: ATP-dependent zinc metalloprotease FTSH 7, chloroplastic (822 aa).

Low complexity-rich tracts occupy residues 1–34, 80–94, and 101–122; these read MASASAAAETLAAASLPVASPSRSLLRPLPRRAS, AEASGPGEASSSSSG, and AAAAAEAGGDGASTSTTSAAAT. Disordered stretches follow at residues 1-44 and 67-136; these read MASA…ASVR and PAAR…ENKW. Residues 1 to 70 constitute a chloroplast transit peptide; the sequence is MASASAAAET…RVLRRPPAAR (70 aa). A run of 2 helical transmembrane segments spans residues 154–174 and 288–308; these read IVQGREMGFLLLQLGFAIFAL and GGLLNSALVALIYVVLIAVVL. 386–393 is an ATP binding site; that stretch reads GLPGTGKT. Position 611 (histidine 611) interacts with Zn(2+). Residue glutamate 612 is part of the active site. Positions 615 and 694 each coordinate Zn(2+).

The protein in the N-terminal section; belongs to the AAA ATPase family. In the C-terminal section; belongs to the peptidase M41 family. The cofactor is Zn(2+).

The protein localises to the plastid. Its subcellular location is the chloroplast thylakoid membrane. In terms of biological role, probable ATP-dependent zinc metallopeptidase. In Oryza sativa subsp. japonica (Rice), this protein is ATP-dependent zinc metalloprotease FTSH 7, chloroplastic (FTSH7).